The primary structure comprises 701 residues: Vacuolar protein sorting-associated protein 52 B (701 aa).

Coiled coils occupy residues 23 to 45 and 511 to 533; these read FEED…EECE and QLDI…LAKL.

The protein belongs to the VPS52 family. As to quaternary structure, component of the Golgi-associated retrograde protein (GARP) complex. Detected in pollen.

The protein resides in the golgi apparatus. Its subcellular location is the trans-Golgi network membrane. The protein localises to the endosome membrane. It localises to the golgi apparatus membrane. In terms of biological role, may be involved in retrograde transport of early and late endosomes to the late Golgi. The protein is Vacuolar protein sorting-associated protein 52 B (P2) of Arabidopsis thaliana (Mouse-ear cress).